We begin with the raw amino-acid sequence, 204 residues long: ATP-dependent Clp protease proteolytic subunit (204 aa).

Ser-102 (nucleophile) is an active-site residue. Residue His-127 is part of the active site.

This sequence belongs to the peptidase S14 family. Fourteen ClpP subunits assemble into 2 heptameric rings which stack back to back to give a disk-like structure with a central cavity, resembling the structure of eukaryotic proteasomes.

The protein resides in the cytoplasm. The enzyme catalyses Hydrolysis of proteins to small peptides in the presence of ATP and magnesium. alpha-casein is the usual test substrate. In the absence of ATP, only oligopeptides shorter than five residues are hydrolyzed (such as succinyl-Leu-Tyr-|-NHMec, and Leu-Tyr-Leu-|-Tyr-Trp, in which cleavage of the -Tyr-|-Leu- and -Tyr-|-Trp bonds also occurs).. Functionally, cleaves peptides in various proteins in a process that requires ATP hydrolysis. Has a chymotrypsin-like activity. Plays a major role in the degradation of misfolded proteins. This chain is ATP-dependent Clp protease proteolytic subunit, found in Neisseria gonorrhoeae (strain ATCC 700825 / FA 1090).